A 738-amino-acid polypeptide reads, in one-letter code: Ethylene receptor (738 aa).

3 consecutive transmembrane segments (helical) span residues 22–42, 53–73, and 91–111; these read ISDFFIAVAYFSIPIELVYFV, VLVQFGAFIVLCGATHLINLW, and VLTAVVSCATALMLVHIIPDL. C64 and H68 together coordinate Cu cation. The 149-residue stretch at 157 to 305 folds into the GAF domain; sequence DRHTILKTTL…VVADQVAVAL (149 aa). A Histidine kinase domain is found at 348 to 585; it reads VMNHEMRTPM…TAIFIVKLGI (238 aa). The residue at position 351 (H351) is a Phosphohistidine; by autocatalysis. In terms of domain architecture, Response regulatory spans 613–730; that stretch reads KVLIMDDNGF…KMRSVLSELL (118 aa). D661 is modified (4-aspartylphosphate).

It belongs to the ethylene receptor family. Homodimer; disulfide-linked. Requires Cu cation as cofactor. Activation probably requires a transfer of a phosphate group between a His in the transmitter domain and an Asp of the receiver domain.

The protein resides in the endoplasmic reticulum membrane. It catalyses the reaction ATP + protein L-histidine = ADP + protein N-phospho-L-histidine.. In terms of biological role, may act early in the ethylene signal transduction pathway, possibly as an ethylene receptor, or as a regulator of the pathway. The polypeptide is Ethylene receptor (ETR1) (Nicotiana tabacum (Common tobacco)).